A 501-amino-acid chain; its full sequence is Cytochrome P450 4d2 (501 aa).

2 residues coordinate heme: Glu311 and Cys449.

The protein belongs to the cytochrome P450 family. It depends on heme as a cofactor.

The protein localises to the endoplasmic reticulum membrane. The protein resides in the microsome membrane. In terms of biological role, involved in the metabolism of insect hormones and in the breakdown of synthetic insecticides. The polypeptide is Cytochrome P450 4d2 (Cyp4d2) (Drosophila melanogaster (Fruit fly)).